The sequence spans 466 residues: Probable Xaa-Pro aminopeptidase pepP (466 aa).

Residues aspartate 264, aspartate 275, glutamate 398, and glutamate 438 each coordinate Mn(2+).

Belongs to the peptidase M24B family. Mn(2+) serves as cofactor.

The enzyme catalyses Release of any N-terminal amino acid, including proline, that is linked to proline, even from a dipeptide or tripeptide.. Its function is as follows. Catalyzes the removal of a penultimate prolyl residue from the N-termini of peptides. This chain is Probable Xaa-Pro aminopeptidase pepP (pepP), found in Aspergillus niger (strain ATCC MYA-4892 / CBS 513.88 / FGSC A1513).